The primary structure comprises 238 residues: CFA/I fimbrial subunit A (238 aa).

The signal sequence occupies residues 1–19 (MHKLFYLLSLLMAPFVANA).

The protein localises to the fimbrium. In terms of biological role, might function as a shuttle protein in the transport of fimbria through the periplasmic space or might function as an adhesin. This is CFA/I fimbrial subunit A (cfaA) from Escherichia coli.